A 722-amino-acid polypeptide reads, in one-letter code: Homeobox-leucine zipper protein HDG11 (722 aa).

Residues 1-19 (MSFVVGVGGSGSGSGGDGG) show a composition bias toward gly residues. Residues 1 to 42 (MSFVVGVGGSGSGSGGDGGGSHHHDGSETDRKKKRYHRHTAQ) form a disordered region. Residues 20–31 (GSHHHDGSETDR) show a composition bias toward basic and acidic residues. Residues 32–91 (KKKRYHRHTAQQIQRLESSFKECPHPDEKQRNQLSRELGLAPRQIKFWFQNRRTQLKAQH) constitute a DNA-binding region (homeobox). A coiled-coil region spans residues 81–161 (QNRRTQLKAQ…LERMSTIASK (81 aa)). The region spanning 227–460 (SDMDKPIMTG…LQRMCERFAS (234 aa)) is the START domain.

It belongs to the HD-ZIP homeobox family. Class IV subfamily. In terms of assembly, interacts with BBM. Expressed in apical meristems and young epidermal tissue including trichomes and stipules. Expressed in lateral root tips, the L1 layer of apical inflorescence meristems and early flower primordia, carpel and petal epidermis, stigma papillae, ovule primordia, nucellus and embryo.

Its subcellular location is the nucleus. Transcription factor which acts as a positive regulator of drought stress tolerance. Can transactivate CIPK3, NCED3 and ERECTA. Transactivates several cell-wall-loosening protein genes by directly binding to HD motifs in their promoters. These target genes play important roles in coordinating cell-wall extensibility with root development and growth. Transactivates CYP74A/AOS, AOC3, OPR3 and 4CLL5/OPCL1 genes by directly binding to HD motifs in their promoters. These target genes are involved in jasmonate (JA) biosynthesis, and JA signaling affects root architecture by activating auxin signaling, which promotes lateral root formation. Acts as a negative regulator of trichome branching. Required for the establishment of giant cell identity on the abaxial side of sepals. Seems to promote cell differentiation. May regulate cell differentiation and proliferation during root and shoot meristem development. The polypeptide is Homeobox-leucine zipper protein HDG11 (Arabidopsis thaliana (Mouse-ear cress)).